A 579-amino-acid polypeptide reads, in one-letter code: Probable zinc metalloprotease EGY1, chloroplastic (579 aa).

2 disordered regions span residues 1-42 and 78-146; these read MAAA…PASA and GGGG…NEPP. A chloroplast-targeting transit peptide spans 1 to 44; it reads MAAAAAALASSPMVHLTASRLRLPRPARSPAAATPSPSPASAAC. A compositionally biased stretch (low complexity) spans 16–42; the sequence is LTASRLRLPRPARSPAAATPSPSPASA. The segment covering 78–92 has biased composition (gly residues); sequence GGGGGGGGGGGGTGG. Composition is skewed to low complexity over residues 104 to 115 and 125 to 137; these read AAAAEAKVGGAV and SGSF…SSSG. 8 helical membrane-spanning segments follow: residues 272 to 292, 321 to 341, 357 to 377, 392 to 412, 419 to 439, 452 to 472, 505 to 525, and 547 to 567; these read YVIS…LGIA, LLPF…IQLF, LSIP…ITQF, MAGP…GLLL, ASDL…LGLV, ATVA…TTAF, LLGL…YVLI, and AALI…WDEL.

This sequence belongs to the peptidase M50B family.

It is found in the plastid. The protein resides in the chloroplast membrane. In terms of biological role, probable membrane-associated metalloprotease that may be involved in chloroplast development. The protein is Probable zinc metalloprotease EGY1, chloroplastic (EGY1) of Oryza sativa subsp. japonica (Rice).